Reading from the N-terminus, the 217-residue chain is MAVIGEKFPDVELLTTHGKLKLPEHFIEAGKWFVLFSHPGDFTPVCTTEFVAFQKRYDQFRELNTELIGLSIDQVFSHIKWVEWIKEKLDVDIEFPIIADERGDLAVKLGMISPFKGSNTVRAVFVVDATGTIRAIIYYPQEVGRNMDEVVRLVKALQTADKGYATPADWPNNELLKEKVIIPPAKDMKTRAERLEACKRGDISGYDWWFCYTNLKE.

Positions 2 to 159 (AVIGEKFPDV…VVRLVKALQT (158 aa)) constitute a Thioredoxin domain. The Cysteine sulfenic acid (-SOH) intermediate role is filled by cysteine 46. Arginine 122 is a binding site for substrate.

It belongs to the peroxiredoxin family. Prx6 subfamily. Homodecamer. Pentamer of dimers that assemble into a ring structure.

It localises to the cytoplasm. The enzyme catalyses a hydroperoxide + [thioredoxin]-dithiol = an alcohol + [thioredoxin]-disulfide + H2O. In terms of biological role, thiol-specific peroxidase that catalyzes the reduction of hydrogen peroxide and organic hydroperoxides to water and alcohols, respectively. Plays a role in cell protection against oxidative stress by detoxifying peroxides. This chain is Peroxiredoxin, found in Methanococcus vannielii (strain ATCC 35089 / DSM 1224 / JCM 13029 / OCM 148 / SB).